We begin with the raw amino-acid sequence, 218 residues long: Glutathione S-transferase Mu 2 (218 aa).

A GST N-terminal domain is found at 2 to 88 (PMTLGYWNIR…YIARKHNLCG (87 aa)). A glutathione-binding site is contributed by 7–8 (YW). 2 positions are modified to phosphoserine: Ser27 and Ser44. Glutathione is bound by residues 43-46 (RSQW), Lys50, 59-60 (NL), and 72-73 (QS). Residues 90-208 (TEKEKIREDI…KSSRFLPRPV (119 aa)) form the GST C-terminal domain. Tyr116 is a substrate binding site.

Belongs to the GST superfamily. Mu family. Homodimer.

It localises to the cytoplasm. It catalyses the reaction RX + glutathione = an S-substituted glutathione + a halide anion + H(+). It carries out the reaction 11(S)-hydroxy-14(S),15(S)-epoxy-(5Z,8Z,12E)-eicosatrienoate + glutathione = (11S,15S)-dihydroxy-14(R)-S-glutathionyl-(5Z,8Z,12E)-eicosatrienoate. In terms of biological role, conjugation of reduced glutathione to a wide number of exogenous and endogenous hydrophobic electrophiles. Participates in the formation of novel hepoxilin regioisomers. Has activity toward aflatoxin B(1)-8,9-epoxide (AFBO). This Macaca fascicularis (Crab-eating macaque) protein is Glutathione S-transferase Mu 2 (GSTM2).